We begin with the raw amino-acid sequence, 496 residues long: Legumin (496 aa).

The signal sequence occupies residues 1–21 (MAKLLALSLSFCFLLFGTCFA). Cystine bridges form between Cys-31-Cys-64 and Cys-107-Cys-318. The 195-residue stretch at 36–230 (LNALKPDNRI…ALNVNRRIVN (195 aa)) folds into the Cupin type-1 1 domain. The segment at 240–311 (EKGAIVKVKG…RGGSKSQRDN (72 aa)) is disordered. Residues 257 to 269 (PEKEPRQKRGSRQ) show a composition bias toward basic and acidic residues. The region spanning 324 to 453 (QNIGSSSSPD…INVCQKKLLQ (130 aa)) is the Cupin type-1 2 domain.

Belongs to the 11S seed storage protein (globulins) family. Hexamer; each subunit is composed of an acidic and a basic chain derived from a single precursor and linked by a disulfide bond.

Seed storage protein. Alpha-amylase inhibitor. In Cicer arietinum (Chickpea), this protein is Legumin.